A 486-amino-acid polypeptide reads, in one-letter code: Cardiolipin synthase A (486 aa).

Helical transmembrane passes span 3–23 (TFYT…IAGV) and 38–58 (MAWL…YLSV). PLD phosphodiesterase domains lie at 219 to 246 (MDLR…VDPR) and 399 to 426 (EGGL…DMRS). Residues H224, K226, D231, H404, K406, and D411 contribute to the active site.

This sequence belongs to the phospholipase D family. Cardiolipin synthase subfamily. ClsA sub-subfamily.

It is found in the cell inner membrane. The enzyme catalyses 2 a 1,2-diacyl-sn-glycero-3-phospho-(1'-sn-glycerol) = a cardiolipin + glycerol. Functionally, catalyzes the reversible phosphatidyl group transfer from one phosphatidylglycerol molecule to another to form cardiolipin (CL) (diphosphatidylglycerol) and glycerol. The chain is Cardiolipin synthase A from Salmonella choleraesuis (strain SC-B67).